The following is a 101-amino-acid chain: Large ribosomal subunit protein eL21 (101 aa).

A compositionally biased stretch (basic residues) spans 1-18 (MVKHSRGYRTRSRSLLRK). Residues 1–23 (MVKHSRGYRTRSRSLLRKSPRER) form a disordered region.

This sequence belongs to the eukaryotic ribosomal protein eL21 family.

This Saccharolobus islandicus (strain Y.G.57.14 / Yellowstone #1) (Sulfolobus islandicus) protein is Large ribosomal subunit protein eL21.